A 346-amino-acid chain; its full sequence is Insertion element IS476 uncharacterized 39.2 kDa protein (346 aa).

Residues 1–50 (MVSARPAFISGGPSTGGWRPTRQAAERTGGPEHSIEEVAGRGAPGHRSAE) form a disordered region. The segment covering 29–39 (GGPEHSIEEVA) has biased composition (basic and acidic residues). Positions 169-329 (ASSMPNDTWS…IPPAQFAANY (161 aa)) constitute an Integrase catalytic domain.

In Xanthomonas euvesicatoria, this protein is Insertion element IS476 uncharacterized 39.2 kDa protein.